The following is a 249-amino-acid chain: MLKQRFVLDTTALTDLQTREVMGYASLCEGMKAILDLIADARLHFGISCYVPYPSVYKEMYEFASRNGCDREVVAKIDTWLVKKSPDRYRVSVTSQIFHEYVAYMRERINRGMGVAEDAIWEAATECLFMENPQNKKKEYKEEVEREVIGGIIGKFRNKYRAALRYGILDSAPDIDVLILAKELDAAVIASDYGIEKWAEQLGVRFVPANVFPMMIQEYLKHLPENENEPEYENRDKSKEGSSGEIEFI.

A disordered region spans residues 226 to 249 (NENEPEYENRDKSKEGSSGEIEFI). The segment covering 232-242 (YENRDKSKEGS) has biased composition (basic and acidic residues).

The protein belongs to the HARP family.

It carries out the reaction Endonucleolytic cleavage of RNA, removing 5'-extranucleotides from tRNA precursor.. In terms of biological role, RNA-free RNase P that catalyzes the removal of the 5'-leader sequence from pre-tRNA to produce the mature 5'-terminus. In Methanosarcina barkeri (strain Fusaro / DSM 804), this protein is RNA-free ribonuclease P.